Reading from the N-terminus, the 283-residue chain is Elongation factor Ts (283 aa).

Residues 80–83 (TDFV) form an involved in Mg(2+) ion dislocation from EF-Tu region.

The protein belongs to the EF-Ts family.

Its subcellular location is the cytoplasm. Its function is as follows. Associates with the EF-Tu.GDP complex and induces the exchange of GDP to GTP. It remains bound to the aminoacyl-tRNA.EF-Tu.GTP complex up to the GTP hydrolysis stage on the ribosome. The protein is Elongation factor Ts of Erwinia tasmaniensis (strain DSM 17950 / CFBP 7177 / CIP 109463 / NCPPB 4357 / Et1/99).